Consider the following 999-residue polypeptide: Signal peptide, CUB and EGF-like domain-containing protein 2 (999 aa).

The N-terminal stretch at 1–31 (MGVAGRNRPGAAWAVLLLLLLLPPLLLLAGA) is a signal peptide. The EGF-like 1; calcium-binding domain occupies 45-85 (DVDECAQGLDDCHADALCQNTPTSYKCSCKPGYQGEGRQCE). 6 disulfide bridges follow: cysteine 49–cysteine 62, cysteine 56–cysteine 71, cysteine 73–cysteine 84, cysteine 90–cysteine 102, cysteine 98–cysteine 111, and cysteine 113–cysteine 126. In terms of domain architecture, EGF-like 2; calcium-binding spans 86-127 (DIDECGNELNGGCVHDCLNIPGNYRCTCFDGFMLAHDGHNCL). The region spanning 128–168 (DVDECLENNGGCQHTCVNVMGSYECCCKEGFFLSDNQHTCI) is the EGF-like 3; calcium-binding domain. EGF-like domains lie at 177–213 (CMNKDHGCSHICKEAPRGSVACECRPGFELAKNQRDC), 217–252 (CNHGNGGCQHSCDDTADGPECSCHPQYKMHTDGRSC), and 286–321 (CAVNNGGCDRTCKDTSTGVHCSCPVGFTLQLDGKTC). The region spanning 323–363 (DIDECQTRNGGCDHFCKNIVGSFDCGCKKGFKLLTDEKSCQ) is the EGF-like 7; calcium-binding domain. The EGF-like 8; calcium-binding domain maps to 364–402 (DVDECSLDRTCDHSCINHPGTFACACNRGYTLYGFTHCG). Disulfide bonds link cysteine 368–cysteine 378, cysteine 374–cysteine 387, cysteine 389–cysteine 401, cysteine 407–cysteine 418, cysteine 414–cysteine 427, and cysteine 429–cysteine 442. The EGF-like 9; calcium-binding domain occupies 403 to 443 (DTNECSINNGGCQQVCVNTVGSYECQCHPGYKLHWNKKDCV). Asparagine 659 is a glycosylation site (N-linked (GlcNAc...) asparagine). Cysteine 809 and cysteine 835 are disulfide-bonded. One can recognise a CUB domain in the interval 809–921 (CGGELGDFTG…RGFQVPYVTY (113 aa)). The interval 847-856 (ILIVVPEIFL) is interaction with the cholesterol-anchor of SHH. Cysteine 862 and cysteine 883 form a disulfide bridge.

As to quaternary structure, forms homooligomers. Forms heterooligomers with SCUBE1. Forms heterooligomers with SCUBE3. Interacts with SHH via the cholesterol anchor of the dually lipid-modified SHH (ShhNp). Interacts with PTCH1. Interacts with VEGFR2. N-glycosylated. As to expression, expressed in a broad spectrum of adult tissues.

Its subcellular location is the secreted. It is found in the cell surface. Lipid-binding protein required for SHH long-range signaling by binding to the dually lipid-modified SHH (ShhNp) and by promoting ShhNp mobilization, solubilization and release from the cell membrane. Acts by enhancing the proteolytic processing (shedding) of the lipid-modified N- and C- terminal of ShhNp at the cell surface. Synergizes with DISP1 to increase SHH secretion. Probable cell surface coreceptor for VEGFR2 involved in VEGFR2-mediated angiogenesis. This chain is Signal peptide, CUB and EGF-like domain-containing protein 2, found in Homo sapiens (Human).